The primary structure comprises 612 residues: Dihydroxy-acid dehydratase (612 aa).

Residue Asp-81 coordinates Mg(2+). Residue Cys-122 participates in [2Fe-2S] cluster binding. Residues Asp-123 and Lys-124 each coordinate Mg(2+). N6-carboxylysine is present on Lys-124. A [2Fe-2S] cluster-binding site is contributed by Cys-195. Glu-491 contacts Mg(2+). Ser-517 acts as the Proton acceptor in catalysis.

It belongs to the IlvD/Edd family. Homodimer. [2Fe-2S] cluster is required as a cofactor. It depends on Mg(2+) as a cofactor.

The catalysed reaction is (2R)-2,3-dihydroxy-3-methylbutanoate = 3-methyl-2-oxobutanoate + H2O. The enzyme catalyses (2R,3R)-2,3-dihydroxy-3-methylpentanoate = (S)-3-methyl-2-oxopentanoate + H2O. It participates in amino-acid biosynthesis; L-isoleucine biosynthesis; L-isoleucine from 2-oxobutanoate: step 3/4. Its pathway is amino-acid biosynthesis; L-valine biosynthesis; L-valine from pyruvate: step 3/4. Its function is as follows. Functions in the biosynthesis of branched-chain amino acids. Catalyzes the dehydration of (2R,3R)-2,3-dihydroxy-3-methylpentanoate (2,3-dihydroxy-3-methylvalerate) into 2-oxo-3-methylpentanoate (2-oxo-3-methylvalerate) and of (2R)-2,3-dihydroxy-3-methylbutanoate (2,3-dihydroxyisovalerate) into 2-oxo-3-methylbutanoate (2-oxoisovalerate), the penultimate precursor to L-isoleucine and L-valine, respectively. The polypeptide is Dihydroxy-acid dehydratase (Psychromonas ingrahamii (strain DSM 17664 / CCUG 51855 / 37)).